Reading from the N-terminus, the 331-residue chain is DNA-directed RNA polymerase subunit alpha (331 aa).

The alpha N-terminal domain (alpha-NTD) stretch occupies residues 1 to 232 (MQGTFRDFLK…DQLSVFVDLE (232 aa)). An alpha C-terminal domain (alpha-CTD) region spans residues 247 to 331 (VDPILLRPID…AGLGEDRVVG (85 aa)).

The protein belongs to the RNA polymerase alpha chain family. Homodimer. The RNAP catalytic core consists of 2 alpha, 1 beta, 1 beta' and 1 omega subunit. When a sigma factor is associated with the core the holoenzyme is formed, which can initiate transcription.

The enzyme catalyses RNA(n) + a ribonucleoside 5'-triphosphate = RNA(n+1) + diphosphate. In terms of biological role, DNA-dependent RNA polymerase catalyzes the transcription of DNA into RNA using the four ribonucleoside triphosphates as substrates. The protein is DNA-directed RNA polymerase subunit alpha of Alkalilimnicola ehrlichii (strain ATCC BAA-1101 / DSM 17681 / MLHE-1).